Here is a 671-residue protein sequence, read N- to C-terminus: Bifunctional acetylxylan esterase/xylanase XynS20E (671 aa).

Residues 1-19 form the signal peptide; it reads MRLGVALSTIAVLLTATSA. Positions 54-279 are acetylxylan esterase; it reads QGAGRDIHVY…IQDIWDFVSQ (226 aa). Ser152 acts as the Charge relay system in catalysis. Asn238 carries an N-linked (GlcNAc...) asparagine glycan. The tract at residues 285–328 is disordered; it reads PVSASGNGGGNTTPTNPSTGGNGNGNGGGNTTPTNPSTGGNGNG. Residues 304 to 314 show a composition bias toward gly residues; that stretch reads GGNGNGNGGGN. CBM10 domains follow at residues 335-374 and 383-422; these read KCSSNITKQGYKCCASNCEVVYTDSDGDWGVENDQWCGCG and TCSAKILQQGYKCCPSGCIIYYTDEDGTWGVNGEEWCGCG. Asn339 carries an N-linked (GlcNAc...) asparagine glycan. N-linked (GlcNAc...) asparagine glycosylation is found at Asn445 and Asn483. The GH11 domain maps to 461 to 661; that stretch reads TVTSNKVGDI…NNGGTSGTAD (201 aa). Catalysis depends on Glu555, which acts as the Nucleophile. Glu648 (proton donor) is an active-site residue.

In the N-terminal section; belongs to the axeA family. The protein in the C-terminal section; belongs to the glycosyl hydrolase 11 (cellulase G) family.

The protein localises to the secreted. The enzyme catalyses Deacetylation of xylans and xylo-oligosaccharides.. It catalyses the reaction Endohydrolysis of (1-&gt;4)-beta-D-xylosidic linkages in xylans.. It participates in glycan degradation; xylan degradation. Bifunctional acetylxylan esterase/xylanase involved in the hydrolysis of xylan, a major structural heterogeneous polysaccharide found in plant biomass representing the second most abundant polysaccharide in the biosphere, after cellulose. Degrades xylan from acetylxylan, beechwood, birchwood, and oat spelt, and releases acetate from 4-methylumbelliferyl acetate and beta-D-xylose tetraacetate. No activity is observed against carboxy methyl cellulose, beta-glucan, p-nitrophenol acetate, p-nitrophenol laurate, p-nitrophenol myristate, p-nitrophenol, palmitate, or beta-naphthol acetate. This chain is Bifunctional acetylxylan esterase/xylanase XynS20E (xynS20E), found in Neocallimastix patriciarum (Rumen fungus).